The following is a 513-amino-acid chain: MGAYETEKPTKDAAALETQSPEDFDQPSPLRKIISVASIAAGVQFGWALQLSLLTPYVQLLGIPHKWSSLIWLCGPVSGMIVQPIVGFHSDRCRSKFGRRRPFIATGAALVAVAVFLIGYAADFGYKMGDKLEEKVKVRAIGIFALGFWILDVANNTLQGPCRAFLADLAAGDAKRTRVANAFFSFFMAVGNVLGYAAGSYTNLHKMFPFTMTKACDIYCANLKTCFFLSITLLLIVTVTSLWYVNDKQWSPPPRNADDDEKTSSVPLFGEIFGAFKVMKRPMWMLLIVTALNWIAWFPFLLFDTDWMGREVFGGDSDGNERSKKLYSLGVQSGAMGLMFNSIVLGFMSLGVEWIGRKLGGAKRLWGIVNFILAAGLAMTVLVTKFAEDHRKTAGDLAGPSASVKAGALSLFAVLGIPLAITFSTPFALASIFSSCSGAGQGLSLGVLNLAIVIPQMIVSLGGGPFDALFGGGNLPAFIVAAIAAAISGVLALTVLPSPPPDAPKATTMGGFH.

Positions 1-11 (MGAYETEKPTK) are enriched in basic and acidic residues. Positions 1 to 26 (MGAYETEKPTKDAAALETQSPEDFDQ) are disordered. Residues 1-32 (MGAYETEKPTKDAAALETQSPEDFDQPSPLRK) are Cytoplasmic-facing. Ser20 is subject to Phosphoserine. A helical transmembrane segment spans residues 33-53 (IISVASIAAGVQFGWALQLSL). The Extracellular segment spans residues 54-67 (LTPYVQLLGIPHKW). The chain crosses the membrane as a helical span at residues 68 to 88 (SSLIWLCGPVSGMIVQPIVGF). At 89–101 (HSDRCRSKFGRRR) the chain is on the cytoplasmic side. Residues 102–122 (PFIATGAALVAVAVFLIGYAA) form a helical membrane-spanning segment. Over 123–139 (DFGYKMGDKLEEKVKVR) the chain is Extracellular. The chain crosses the membrane as a helical span at residues 140–160 (AIGIFALGFWILDVANNTLQG). Over 161 to 178 (PCRAFLADLAAGDAKRTR) the chain is Cytoplasmic. Residues 179–199 (VANAFFSFFMAVGNVLGYAAG) traverse the membrane as a helical segment. At 200–224 (SYTNLHKMFPFTMTKACDIYCANLK) the chain is on the extracellular side. Residues 225-245 (TCFFLSITLLLIVTVTSLWYV) traverse the membrane as a helical segment. At 246–282 (NDKQWSPPPRNADDDEKTSSVPLFGEIFGAFKVMKRP) the chain is on the cytoplasmic side. The chain crosses the membrane as a helical span at residues 283–303 (MWMLLIVTALNWIAWFPFLLF). Over 304 to 334 (DTDWMGREVFGGDSDGNERSKKLYSLGVQSG) the chain is Extracellular. The chain crosses the membrane as a helical span at residues 335 to 355 (AMGLMFNSIVLGFMSLGVEWI). Residues 356 to 365 (GRKLGGAKRL) lie on the Cytoplasmic side of the membrane. A helical transmembrane segment spans residues 366-386 (WGIVNFILAAGLAMTVLVTKF). The Extracellular segment spans residues 387–408 (AEDHRKTAGDLAGPSASVKAGA). Residues 409-429 (LSLFAVLGIPLAITFSTPFAL) traverse the membrane as a helical segment. Residues 430-441 (ASIFSSCSGAGQ) are Cytoplasmic-facing. The helical transmembrane segment at 442–462 (GLSLGVLNLAIVIPQMIVSLG) threads the bilayer. The Extracellular portion of the chain corresponds to 463-474 (GGPFDALFGGGN). The chain crosses the membrane as a helical span at residues 475-495 (LPAFIVAAIAAAISGVLALTV). Over 496 to 513 (LPSPPPDAPKATTMGGFH) the chain is Cytoplasmic.

This sequence belongs to the glycoside-pentoside-hexuronide (GPH) cation symporter transporter (TC 2.A.2.4) family. Expressed in flowers (at protein level). Highly expressed in pollen. Expressed in pollen tubes and root vascular cylinder, pericycle and endodermis.

It localises to the membrane. It carries out the reaction sucrose(out) + H(+)(out) = sucrose(in) + H(+)(in). It participates in glycan biosynthesis; sucrose metabolism. Its activity is regulated as follows. Inhibited by DEPC, protonophores (e.g. dinitrophenol and carbonyl cyanide m-chlorophenyl-hydrazone (CCCP)), and SH group inhibitors (e.g. N-ethylmaleimide (NEM) and p-chloromercuriphenyl sulphonic acid (PCMPS)). Its function is as follows. Responsible for the transport of sucrose into the cell, with the concomitant uptake of protons (symport system). This transport is both voltage- and energy-dependent. Can also transport other glucosides such as maltose, alpha-phenylglucoside and beta-phenylglucoside. May also transport biotin. Required for normal pollen germination and anthocyanin accumulation induced by sucrose. The polypeptide is Sucrose transport protein SUC1 (Arabidopsis thaliana (Mouse-ear cress)).